Consider the following 349-residue polypeptide: UDP-3-O-acylglucosamine N-acyltransferase (349 aa).

The Proton acceptor role is filled by H243.

This sequence belongs to the transferase hexapeptide repeat family. LpxD subfamily. In terms of assembly, homotrimer.

The enzyme catalyses a UDP-3-O-[(3R)-3-hydroxyacyl]-alpha-D-glucosamine + a (3R)-hydroxyacyl-[ACP] = a UDP-2-N,3-O-bis[(3R)-3-hydroxyacyl]-alpha-D-glucosamine + holo-[ACP] + H(+). Its pathway is bacterial outer membrane biogenesis; LPS lipid A biosynthesis. Its function is as follows. Catalyzes the N-acylation of UDP-3-O-acylglucosamine using 3-hydroxyacyl-ACP as the acyl donor. Is involved in the biosynthesis of lipid A, a phosphorylated glycolipid that anchors the lipopolysaccharide to the outer membrane of the cell. This chain is UDP-3-O-acylglucosamine N-acyltransferase, found in Myxococcus xanthus (strain DK1622).